The chain runs to 74 residues: Sec-independent protein translocase protein TatA (74 aa).

A helical transmembrane segment spans residues 1-21 (MGGISIWQLLIIVAIIVLLFG). The disordered stretch occupies residues 51–74 (ANFDKVEAKESTSTTEKTKEKEQA).

This sequence belongs to the TatA/E family. In terms of assembly, the Tat system comprises two distinct complexes: a TatABC complex, containing multiple copies of TatA, TatB and TatC subunits, and a separate TatA complex, containing only TatA subunits. Substrates initially bind to the TatABC complex, which probably triggers association of the separate TatA complex to form the active translocon.

Its subcellular location is the cell inner membrane. In terms of biological role, part of the twin-arginine translocation (Tat) system that transports large folded proteins containing a characteristic twin-arginine motif in their signal peptide across membranes. TatA could form the protein-conducting channel of the Tat system. The chain is Sec-independent protein translocase protein TatA from Haemophilus ducreyi (strain 35000HP / ATCC 700724).